The chain runs to 156 residues: Persephin (156 aa).

The signal sequence occupies residues 1–21 (MAAGRLRILCLLLLSLHPSLG). 3 disulfides stabilise this stretch: cysteine 66–cysteine 124, cysteine 93–cysteine 152, and cysteine 97–cysteine 154.

Belongs to the TGF-beta family. GDNF subfamily. Homodimer; disulfide-linked. Interacts with GFRA4 coreceptor and RET: forms a 2:2:2 ternary complex composed of PSPN ligand, GFRA4 and RET receptor.

The protein localises to the secreted. In terms of biological role, growth factor that exhibits neurotrophic activity on mesencephalic dopaminergic and motor neurons. Acts by binding to its coreceptor, GFRA4, leading to autophosphorylation and activation of the RET receptor. The protein is Persephin of Mus musculus (Mouse).